Consider the following 433-residue polypeptide: Elongation factor 1-alpha (433 aa).

In terms of domain architecture, tr-type G spans 5-220 (KPHINVVFIG…ALDMLKPPQL (216 aa)). Residues 14 to 21 (GHVDHGKS) are G1. 14–21 (GHVDHGKS) is a GTP binding site. Serine 21 serves as a coordination point for Mg(2+). Residues 70–74 (GVTID) form a G2 region. Residues 91–94 (DAPG) form a G3 region. Residues 91-95 (DAPGH) and 146-149 (NKMD) contribute to the GTP site. Positions 146–149 (NKMD) are G4. The tract at residues 186–188 (ASF) is G5.

It belongs to the TRAFAC class translation factor GTPase superfamily. Classic translation factor GTPase family. EF-Tu/EF-1A subfamily.

It localises to the cytoplasm. The catalysed reaction is GTP + H2O = GDP + phosphate + H(+). GTP hydrolase that promotes the GTP-dependent binding of aminoacyl-tRNA to the A-site of ribosomes during protein biosynthesis. In Nanoarchaeum equitans (strain Kin4-M), this protein is Elongation factor 1-alpha.